The primary structure comprises 499 residues: Probable dipeptidase B (499 aa).

The active site involves Cys26.

It belongs to the peptidase C69 family.

The enzyme catalyses an L-aminoacyl-L-amino acid + H2O = 2 an L-alpha-amino acid. In Streptococcus pyogenes serotype M18 (strain MGAS8232), this protein is Probable dipeptidase B (pepDB).